The sequence spans 355 residues: MGFGLESIKSISGGWGAAARSCDACKSVTAAVFCRVDSAFLCIACDTRIHSFTRHERVWVCEVCEQAPAAVTCKADAAALCVSCDADIHSANPLASRHERVPVETFFDSAETAVAKISASSTFGILGSSTTVDLTAVPVMADDLGLCPWLLPNDFNEPAKIEIGTENMKGSSDFMFSDFDRLIDFEFPNSFNHHQNNAGGDSLVPVQTKTEPLPLTNNDHCFDIDFCRSKLSAFTYPSQSVSHSVSTSSIEYGVVPDGNTNNSVNRSTITSSTTGGDHQASSMDREARVLRYREKRKNRKFEKTIRYASRKAYAESRPRIKGRFAKRTETENDDIFLSHVYASAAHAQYGVVPTF.

Zn(2+) is bound by residues Cys22, Cys25, Cys45, His50, Cys61, Cys64, Cys84, and His89. Residues 22 to 60 form a B box-type 1; atypical zinc finger; the sequence is CDACKSVTAAVFCRVDSAFLCIACDTRIHSFTRHERVWV. The segment at 61–103 adopts a B box-type 2; atypical zinc-finger fold; the sequence is CEVCEQAPAAVTCKADAAALCVSCDADIHSANPLASRHERVPV. The CCT domain occupies 285 to 327; it reads REARVLRYREKRKNRKFEKTIRYASRKAYAESRPRIKGRFAKR.

This sequence belongs to the CONSTANS family.

It localises to the nucleus. The polypeptide is Zinc finger protein CONSTANS-LIKE 5 (COL5) (Arabidopsis thaliana (Mouse-ear cress)).